A 96-amino-acid polypeptide reads, in one-letter code: MSRISIEEVKHVAHLARLAITDEEAEMFTEQLDSIISFAEELNEVDTDNVEPTTHVLKMKNVMREDEAGKGLPVEDVMKNAPDHKDGYVRVPSILD.

The protein belongs to the GatC family. As to quaternary structure, heterotrimer of A, B and C subunits.

It carries out the reaction L-glutamyl-tRNA(Gln) + L-glutamine + ATP + H2O = L-glutaminyl-tRNA(Gln) + L-glutamate + ADP + phosphate + H(+). The catalysed reaction is L-aspartyl-tRNA(Asn) + L-glutamine + ATP + H2O = L-asparaginyl-tRNA(Asn) + L-glutamate + ADP + phosphate + 2 H(+). Functionally, allows the formation of correctly charged Asn-tRNA(Asn) or Gln-tRNA(Gln) through the transamidation of misacylated Asp-tRNA(Asn) or Glu-tRNA(Gln) in organisms which lack either or both of asparaginyl-tRNA or glutaminyl-tRNA synthetases. The reaction takes place in the presence of glutamine and ATP through an activated phospho-Asp-tRNA(Asn) or phospho-Glu-tRNA(Gln). The sequence is that of Aspartyl/glutamyl-tRNA(Asn/Gln) amidotransferase subunit C from Bacillus velezensis (strain DSM 23117 / BGSC 10A6 / LMG 26770 / FZB42) (Bacillus amyloliquefaciens subsp. plantarum).